Here is a 572-residue protein sequence, read N- to C-terminus: Proline--tRNA ligase (572 aa).

This sequence belongs to the class-II aminoacyl-tRNA synthetase family. ProS type 1 subfamily. In terms of assembly, homodimer.

Its subcellular location is the cytoplasm. The catalysed reaction is tRNA(Pro) + L-proline + ATP = L-prolyl-tRNA(Pro) + AMP + diphosphate. Functionally, catalyzes the attachment of proline to tRNA(Pro) in a two-step reaction: proline is first activated by ATP to form Pro-AMP and then transferred to the acceptor end of tRNA(Pro). As ProRS can inadvertently accommodate and process non-cognate amino acids such as alanine and cysteine, to avoid such errors it has two additional distinct editing activities against alanine. One activity is designated as 'pretransfer' editing and involves the tRNA(Pro)-independent hydrolysis of activated Ala-AMP. The other activity is designated 'posttransfer' editing and involves deacylation of mischarged Ala-tRNA(Pro). The misacylated Cys-tRNA(Pro) is not edited by ProRS. The chain is Proline--tRNA ligase from Citrobacter koseri (strain ATCC BAA-895 / CDC 4225-83 / SGSC4696).